A 566-amino-acid polypeptide reads, in one-letter code: Serine/threonine-protein kinase PknE (566 aa).

Residues 1 to 337 are Cytoplasmic-facing; the sequence is MDGTAESREG…PLPRSARQPW (337 aa). At Ser-7 the chain carries Phosphoserine; by autocatalysis. Thr-11 is modified (phosphothreonine; by autocatalysis). Positions 16-275 constitute a Protein kinase domain; the sequence is YRLRRLVGRG…DLSAAAHAAL (260 aa). ATP is bound by residues 22–30 and Lys-45; that span reads VGRGGMGDV. 2 positions are modified to phosphothreonine; by autocatalysis: Thr-50 and Thr-59. Asp-139 (proton acceptor) is an active-site residue. Thr-170, Thr-175, and Thr-178 each carry phosphothreonine; by autocatalysis. Residues 296-330 are disordered; the sequence is PVPSTHPVSPGTRWPQPTPWAGGAPPWGPPSSPLP. Residues 338–358 form a helical membrane-spanning segment; that stretch reads LWVGVAVAVVVALAGGLGIAL. The Extracellular segment spans residues 359 to 566; that stretch reads AHPWRSSGPR…DPSWLARLIG (208 aa).

This sequence belongs to the protein kinase superfamily. Ser/Thr protein kinase family. Homodimer. Autophosphorylated on serine and threonine residues. Dephosphorylated by PstP.

Its subcellular location is the cell membrane. It carries out the reaction L-seryl-[protein] + ATP = O-phospho-L-seryl-[protein] + ADP + H(+). The enzyme catalyses L-threonyl-[protein] + ATP = O-phospho-L-threonyl-[protein] + ADP + H(+). Functionally, a serine/threonine-protein kinase, acts on HupB in vitro, modifying at least 2 Ser and 8 Thr residues. Important for bacterial survival in the host during infection. The protein is Serine/threonine-protein kinase PknE of Mycobacterium tuberculosis (strain ATCC 25177 / H37Ra).